The sequence spans 552 residues: uncharacterized protein (552 aa).

Positions 8–200 constitute a DhaL domain; that stretch reads KLFAEMIIQG…LAIVYAGFLK (193 aa).

This is an uncharacterized protein from Staphylococcus saprophyticus subsp. saprophyticus (strain ATCC 15305 / DSM 20229 / NCIMB 8711 / NCTC 7292 / S-41).